Consider the following 40-residue polypeptide: Cytolysin EnT (40 aa).

The segment at 3-12 is plays an important role in the hemolytic activity; the sequence is ALAGTIIEGA. Residues 11–30 are N-terminal region; it reads GASLTFSVLTTILDALGSVS.

This sequence belongs to the actinoporin family. Sea anemone subfamily. In terms of assembly, octamer or nonamer in membranes. Monomer in the soluble state.

It is found in the secreted. The protein localises to the nematocyst. It localises to the target cell membrane. Functionally, pore-forming protein that forms cations-selective hydrophilic pores of around 1 nm and causes cytolysis. Pore formation is a multi-step process that involves specific recognition of membrane sphingomyelin (but neither cholesterol nor phosphatidylcholine) using aromatic rich region and adjacent phosphocholine (POC) binding site, firm binding to the membrane (mainly driven by hydrophobic interactions) accompanied by the transfer of the N-terminal region to the lipid-water interface and finally pore formation after oligomerization of monomers. This toxin shows hemolytic activities. The polypeptide is Cytolysin EnT (Entacmaea quadricolor (Bubble-tip anemone)).